The following is a 764-amino-acid chain: 1,4-alpha-glucan branching enzyme GlgB (764 aa).

The Nucleophile role is filled by aspartate 434. Glutamate 487 functions as the Proton donor in the catalytic mechanism.

Belongs to the glycosyl hydrolase 13 family. GlgB subfamily. In terms of assembly, monomer.

The catalysed reaction is Transfers a segment of a (1-&gt;4)-alpha-D-glucan chain to a primary hydroxy group in a similar glucan chain.. Its pathway is glycan biosynthesis; glycogen biosynthesis. In terms of biological role, catalyzes the formation of the alpha-1,6-glucosidic linkages in glycogen by scission of a 1,4-alpha-linked oligosaccharide from growing alpha-1,4-glucan chains and the subsequent attachment of the oligosaccharide to the alpha-1,6 position. This chain is 1,4-alpha-glucan branching enzyme GlgB, found in Trichormus variabilis (strain ATCC 29413 / PCC 7937) (Anabaena variabilis).